We begin with the raw amino-acid sequence, 497 residues long: MDPLGAPSQFVDVDTLPSWGNSCEDQLNASEIAAETYQEETIRSPFLYNKDINGKVVLWKGDVALLNCTAIVNTSNESLTDKNPVSESIFMLAGPDLKEDLQKLRGCRTGEAKLTKGFNLAARFIIHTVGPKYKSRYRTAAESSLYSCYRNVLQLAKEQSMSSVGFCVINSAKRGYPLEDATHIALRTVRRFLEIHGETLEKVVFAVSELEEATYQKLLPLYFPRSLKEESRSLPCLPADIGNAEGEPVVPERQIRISEKPGAPEDNQEEEDEGLGVDLSFIGSHAFARMEGDIDKQRRLILQGQLSEAALQKQHQRNYNRWLCQARSEDLSDIASLKALYQTGVDNCGRTVMVVVGRNIPVTLIDMDKALLYFIHVMDHIAVKEYVLVYFHTLTSEYNHLDSDFLKKLYDVVDVKYKRNLKAVYFVHPTFRSKVSTWFFTTFSVSGLKDKIHHVDSLHQLFSAISPEQIDFPPFVLEYDARENGPYYTSYLPSPDL.

One can recognise a Macro domain in the interval 43–223 (RSPFLYNKDI…TYQKLLPLYF (181 aa)). The tract at residues 251 to 273 (PERQIRISEKPGAPEDNQEEEDE) is disordered. A compositionally biased stretch (basic and acidic residues) spans 253–263 (RQIRISEKPGA). The residue at position 280 (serine 280) is a Phosphoserine. In terms of domain architecture, CRAL-TRIO spans 333-481 (DIASLKALYQ…FPPFVLEYDA (149 aa)).

The protein belongs to the GDAP2 family.

This Bos taurus (Bovine) protein is Ganglioside-induced differentiation-associated protein 2 (GDAP2).